A 324-amino-acid chain; its full sequence is Beta-ketoacyl-[acyl-carrier-protein] synthase III (324 aa).

Active-site residues include C116 and H251. Residues 252–256 (QANLR) form an ACP-binding region. N281 is an active-site residue.

The protein belongs to the thiolase-like superfamily. FabH family. As to quaternary structure, homodimer.

Its subcellular location is the cytoplasm. It carries out the reaction malonyl-[ACP] + acetyl-CoA + H(+) = 3-oxobutanoyl-[ACP] + CO2 + CoA. It participates in lipid metabolism; fatty acid biosynthesis. Functionally, catalyzes the condensation reaction of fatty acid synthesis by the addition to an acyl acceptor of two carbons from malonyl-ACP. Catalyzes the first condensation reaction which initiates fatty acid synthesis and may therefore play a role in governing the total rate of fatty acid production. Possesses both acetoacetyl-ACP synthase and acetyl transacylase activities. Its substrate specificity determines the biosynthesis of branched-chain and/or straight-chain of fatty acids. The polypeptide is Beta-ketoacyl-[acyl-carrier-protein] synthase III (Xylella fastidiosa (strain Temecula1 / ATCC 700964)).